A 209-amino-acid polypeptide reads, in one-letter code: Ribosomal RNA large subunit methyltransferase E (209 aa).

S-adenosyl-L-methionine is bound by residues glycine 63, tryptophan 65, aspartate 83, aspartate 99, and aspartate 124. Residue lysine 164 is the Proton acceptor of the active site.

Belongs to the class I-like SAM-binding methyltransferase superfamily. RNA methyltransferase RlmE family.

It localises to the cytoplasm. The enzyme catalyses uridine(2552) in 23S rRNA + S-adenosyl-L-methionine = 2'-O-methyluridine(2552) in 23S rRNA + S-adenosyl-L-homocysteine + H(+). In terms of biological role, specifically methylates the uridine in position 2552 of 23S rRNA at the 2'-O position of the ribose in the fully assembled 50S ribosomal subunit. The sequence is that of Ribosomal RNA large subunit methyltransferase E from Photobacterium profundum (strain SS9).